A 391-amino-acid chain; its full sequence is Phosphopentomutase (391 aa).

The Mn(2+) site is built by D12, D285, H290, D326, H327, and H338.

This sequence belongs to the phosphopentomutase family. Mn(2+) serves as cofactor.

Its subcellular location is the cytoplasm. It carries out the reaction 2-deoxy-alpha-D-ribose 1-phosphate = 2-deoxy-D-ribose 5-phosphate. It catalyses the reaction alpha-D-ribose 1-phosphate = D-ribose 5-phosphate. The protein operates within carbohydrate degradation; 2-deoxy-D-ribose 1-phosphate degradation; D-glyceraldehyde 3-phosphate and acetaldehyde from 2-deoxy-alpha-D-ribose 1-phosphate: step 1/2. In terms of biological role, isomerase that catalyzes the conversion of deoxy-ribose 1-phosphate (dRib-1-P) and ribose 1-phosphate (Rib-1-P) to deoxy-ribose 5-phosphate (dRib-5-P) and ribose 5-phosphate (Rib-5-P), respectively. This Herpetosiphon aurantiacus (strain ATCC 23779 / DSM 785 / 114-95) protein is Phosphopentomutase.